The following is a 931-amino-acid chain: Kinesin heavy chain (931 aa).

In terms of domain architecture, Kinesin motor spans 6–329; the sequence is SIKVVARFRP…LRFGMRAKSI (324 aa). ATP contacts are provided by residues 87 to 94 and 237 to 244; these read GQTGAGKS and GSEKVGKT. Residues 342-864 adopt a coiled-coil conformation; the sequence is AELKSLLKKA…VKERLELAKA (523 aa). Disordered regions lie at residues 388–465 and 886–931; these read TTDA…EKQL and AKPL…FTKS. Residues 402–419 show a composition bias toward polar residues; that stretch reads STRPSTPSLISDSRSETP. The segment covering 432–456 has biased composition (basic and acidic residues); it reads LDKDEREEFLRRENELQDQISEKES. The segment covering 902 to 931 has biased composition (polar residues); the sequence is PTIQNLQGQNEGNTSSGSSSKRASWFFTKS.

This sequence belongs to the TRAFAC class myosin-kinesin ATPase superfamily. Kinesin family. Kinesin subfamily.

The protein localises to the cytoplasm. Its subcellular location is the cytoskeleton. Kinesin is a microtubule-associated force-producing protein that may play a role in organelle transport. Its motor activity is directed toward the microtubule's plus end. This Gibberella moniliformis (Maize ear and stalk rot fungus) protein is Kinesin heavy chain (KLP1).